The chain runs to 230 residues: Cytochrome c oxidase subunit 2 (230 aa).

The Mitochondrial intermembrane segment spans residues methionine 1–serine 14. Residues proline 15–methionine 45 form a helical membrane-spanning segment. Over leucine 46–glutamine 59 the chain is Mitochondrial matrix. A helical membrane pass occupies residues glutamate 60–methionine 87. Topologically, residues aspartate 88–serine 230 are mitochondrial intermembrane. Residues histidine 161, cysteine 196, glutamate 198, cysteine 200, histidine 204, and methionine 207 each coordinate Cu cation. Glutamate 198 is a Mg(2+) binding site. Position 218 is a phosphotyrosine (tyrosine 218).

Belongs to the cytochrome c oxidase subunit 2 family. In terms of assembly, component of the cytochrome c oxidase (complex IV, CIV), a multisubunit enzyme composed of 14 subunits. The complex is composed of a catalytic core of 3 subunits MT-CO1, MT-CO2 and MT-CO3, encoded in the mitochondrial DNA, and 11 supernumerary subunits COX4I, COX5A, COX5B, COX6A, COX6B, COX6C, COX7A, COX7B, COX7C, COX8 and NDUFA4, which are encoded in the nuclear genome. The complex exists as a monomer or a dimer and forms supercomplexes (SCs) in the inner mitochondrial membrane with NADH-ubiquinone oxidoreductase (complex I, CI) and ubiquinol-cytochrome c oxidoreductase (cytochrome b-c1 complex, complex III, CIII), resulting in different assemblies (supercomplex SCI(1)III(2)IV(1) and megacomplex MCI(2)III(2)IV(2)). Found in a complex with TMEM177, COA6, COX18, COX20, SCO1 and SCO2. Interacts with TMEM177 in a COX20-dependent manner. Interacts with COX20. Interacts with COX16. Cu cation serves as cofactor.

The protein localises to the mitochondrion inner membrane. The enzyme catalyses 4 Fe(II)-[cytochrome c] + O2 + 8 H(+)(in) = 4 Fe(III)-[cytochrome c] + 2 H2O + 4 H(+)(out). Its function is as follows. Component of the cytochrome c oxidase, the last enzyme in the mitochondrial electron transport chain which drives oxidative phosphorylation. The respiratory chain contains 3 multisubunit complexes succinate dehydrogenase (complex II, CII), ubiquinol-cytochrome c oxidoreductase (cytochrome b-c1 complex, complex III, CIII) and cytochrome c oxidase (complex IV, CIV), that cooperate to transfer electrons derived from NADH and succinate to molecular oxygen, creating an electrochemical gradient over the inner membrane that drives transmembrane transport and the ATP synthase. Cytochrome c oxidase is the component of the respiratory chain that catalyzes the reduction of oxygen to water. Electrons originating from reduced cytochrome c in the intermembrane space (IMS) are transferred via the dinuclear copper A center (CU(A)) of subunit 2 and heme A of subunit 1 to the active site in subunit 1, a binuclear center (BNC) formed by heme A3 and copper B (CU(B)). The BNC reduces molecular oxygen to 2 water molecules using 4 electrons from cytochrome c in the IMS and 4 protons from the mitochondrial matrix. This Ornithorhynchus anatinus (Duckbill platypus) protein is Cytochrome c oxidase subunit 2 (MT-CO2).